We begin with the raw amino-acid sequence, 117 residues long: Envelope glycoprotein J (117 aa).

The N-terminal stretch at 1 to 26 (MRSLLFVVGAWVAAAVTHLTPNAALA) is a signal peptide. The segment at 26–64 (ATGTTPTVGANSTADPGTGANGTTVPAAGTPANSTTAAE) is disordered. The segment covering 27–40 (TGTTPTVGANSTAD) has biased composition (polar residues). The Extracellular portion of the chain corresponds to 27–73 (TGTTPTVGANSTADPGTGANGTTVPAAGTPANSTTAAETPAPFPPVD). Residues Asn36, Asn46, and Asn58 are each glycosylated (N-linked (GlcNAc...) asparagine; by host). Residues 74–94 (FALPVVIGGLCALTLAAMGAG) form a helical membrane-spanning segment. Topologically, residues 95-117 (ALLHRCCRRAAARRRQRAAYVYA) are cytoplasmic.

Belongs to the alphaherpesvirinae glycoprotein J family.

The protein localises to the host Golgi apparatus membrane. Its subcellular location is the host endoplasmic reticulum membrane. It is found in the host endosome membrane. Inhibits host cell apoptosis. Induces an increase in reactive oxygen species (ROS) in the host cell. The sequence is that of Envelope glycoprotein J (gJ) from Homo sapiens (Human).